A 213-amino-acid polypeptide reads, in one-letter code: Thymidylate kinase (213 aa).

10–17 (GIDGCGKT) lines the ATP pocket.

It belongs to the thymidylate kinase family.

The catalysed reaction is dTMP + ATP = dTDP + ADP. Functionally, phosphorylation of dTMP to form dTDP in both de novo and salvage pathways of dTTP synthesis. The chain is Thymidylate kinase from Synechococcus sp. (strain WH7803).